Here is an 87-residue protein sequence, read N- to C-terminus: uncharacterized protein (87 aa).

The protein resides in the host cytoplasm. This is an uncharacterized protein from Escherichia phage Mu (Bacteriophage Mu).